Reading from the N-terminus, the 557-residue chain is Arginine--tRNA ligase (557 aa).

Positions 132–142 match the 'HIGH' region motif; the sequence is ANPTGDLHLGH.

This sequence belongs to the class-I aminoacyl-tRNA synthetase family. As to quaternary structure, monomer.

It localises to the cytoplasm. The catalysed reaction is tRNA(Arg) + L-arginine + ATP = L-arginyl-tRNA(Arg) + AMP + diphosphate. The polypeptide is Arginine--tRNA ligase (Bacillus pumilus (strain SAFR-032)).